Reading from the N-terminus, the 486-residue chain is UDP-N-acetylmuramate--L-alanine ligase (486 aa).

Glycine 123–threonine 129 contacts ATP.

It belongs to the MurCDEF family.

The protein resides in the cytoplasm. It catalyses the reaction UDP-N-acetyl-alpha-D-muramate + L-alanine + ATP = UDP-N-acetyl-alpha-D-muramoyl-L-alanine + ADP + phosphate + H(+). Its pathway is cell wall biogenesis; peptidoglycan biosynthesis. Cell wall formation. The sequence is that of UDP-N-acetylmuramate--L-alanine ligase from Pseudomonas syringae pv. syringae (strain B728a).